A 373-amino-acid polypeptide reads, in one-letter code: MTGNDILLWDETLFKDLSVLEPDYLPEYFPHRDSQLNALRFALRPSLRGMRPLNCLLVGPPGTGKTSAVMKVFREVEVHAPGVVAVKVNCQIDSTRFAVISRIYRQLFGISPPNSGIAFRKLFETVVNFLVSSEKVLIVALDDLNYLCCEGHANEVMYSLLRAHEQYPGAKIGVIGIVNDASDLYCLDSRVNSVFLPEEISFLRYGEAEILDILKDRVKYGFYPKVISDDVLELVVSYVEKTGDLRVGIDLLRRSGFNAERRGSRTISSGDVEKAYEASKLLHLCRGISLLSDSEKQLLELIAKADDVKAGELYKSFHELTQLGYTRFYGMVNRLQTLNYVDADFTGKGKRGRTRIIKAKYEAEDILNCLKKG.

ATP-binding positions include T63–S67, Y205, and R217.

It belongs to the CDC6/cdc18 family.

In terms of biological role, involved in regulation of DNA replication. The polypeptide is ORC1-type DNA replication protein 2 (cdc6-2) (Methanosarcina acetivorans (strain ATCC 35395 / DSM 2834 / JCM 12185 / C2A)).